The sequence spans 206 residues: Small ribosomal subunit protein uS4 (206 aa).

The S4 RNA-binding domain maps to 96–156; the sequence is CRLDNVVYRM…EKSKNQLRIA (61 aa).

The protein belongs to the universal ribosomal protein uS4 family. As to quaternary structure, part of the 30S ribosomal subunit. Contacts protein S5. The interaction surface between S4 and S5 is involved in control of translational fidelity.

In terms of biological role, one of the primary rRNA binding proteins, it binds directly to 16S rRNA where it nucleates assembly of the body of the 30S subunit. With S5 and S12 plays an important role in translational accuracy. The sequence is that of Small ribosomal subunit protein uS4 from Pseudomonas aeruginosa (strain LESB58).